We begin with the raw amino-acid sequence, 124 residues long: Tax1-binding protein 3 homolog (124 aa).

Residues 18-106 enclose the PDZ domain; the sequence is AVELHKQEVI…DRAVKFIKQS (89 aa).

In terms of biological role, may regulate a number of protein-protein interactions by competing for PDZ domain binding sites. This is Tax1-binding protein 3 homolog from Caenorhabditis elegans.